Consider the following 583-residue polypeptide: MPRGLELLIAQTILQGFDAQYGRFLEVTSGAQQRFEQADWHAVQQAMKSRIHLYDHHVGLVVEQLRCITDGKSTDADFLLRVKEHYTRLLPDYPRFEIAESFFNSVYCRLFDHRSLTPERLFIFSSQPERRFRTIPRPLAKDFFPDHGWEPLLMRILSDLPLRLPWQNKSRDIRYIIAHLTETLGEDALPRCHVQVANELFYRNKAAWLVGKLTTPDGTLPFLLPIHRTDEGELFVDTCLTTTAEASIVFGFARSYFMVYAPLLAALVEWLREILPGKTTAELYMAIGCQKHAKTESYREYLCYLAESDEKFIEAPGIRGMVMLVFTLPGFDRVFKIIKDKFAPQKEMSAAHVRACYQLVKEHDRVGRMADTQEFENFVLDKRQIDPALMALLRQEVPEKITDLGEHIVIRHLYIERRMVPLNIWLEQVEGQQLRDAIEEYGNAIRQLAAANIFPGDMLFKNFGVTRHGRVVFYDYDEICYMTEVNFRDIPPARYPEDELASEPWYSVSPGDVFPEEFRHWLCADPRIGPLFEEMHADLFRADYWRALQTRIKEGHVEDVYAYRRRQRFSVRYGAISSTANSS.

ATP-binding positions include 315–321 (APGIRGM) and lysine 336. Aspartate 371 is an active-site residue.

Belongs to the AceK family.

It localises to the cytoplasm. It catalyses the reaction L-seryl-[isocitrate dehydrogenase] + ATP = O-phospho-L-seryl-[isocitrate dehydrogenase] + ADP + H(+). Bifunctional enzyme which can phosphorylate or dephosphorylate isocitrate dehydrogenase (IDH) on a specific serine residue. This is a regulatory mechanism which enables bacteria to bypass the Krebs cycle via the glyoxylate shunt in response to the source of carbon. When bacteria are grown on glucose, IDH is fully active and unphosphorylated, but when grown on acetate or ethanol, the activity of IDH declines drastically concomitant with its phosphorylation. In Salmonella gallinarum (strain 287/91 / NCTC 13346), this protein is Isocitrate dehydrogenase kinase/phosphatase.